A 624-amino-acid polypeptide reads, in one-letter code: Glyco-Gag protein (624 aa).

Residues leucine 1–arginine 63 lie on the Cytoplasmic side of the membrane. The helical transmembrane segment at alanine 64–serine 86 threads the bilayer. The Extracellular portion of the chain corresponds to glutamate 87 to aspartate 624. N-linked (GlcNAc...) asparagine; by host glycosylation is present at asparagine 113. Pro residues-rich tracts occupy residues proline 200–serine 209 and aspartate 247–proline 258. Disordered stretches follow at residues proline 200 to leucine 284 and leucine 290 to glycine 309. An N-linked (GlcNAc...) asparagine; by host glycan is attached at asparagine 478. 2 stretches are compositionally biased toward basic and acidic residues: residues arginine 520 to arginine 552 and lysine 572 to lysine 605. The tract at residues arginine 520 to aspartate 624 is disordered.

Glycosylated by host. In terms of processing, cleaved by host near the middle of the molecule, releasing the c-terminal half containing capsid and nucleoprotein domains op GAG.

It localises to the host cell membrane. In terms of biological role, plays a role in viral particle release. Presumably acts by facilitating the fission of the virion bud at the cell surface. May prevent the antiviral activity of murine APOBEC3. In Mus musculus (Mouse), this protein is Glyco-Gag protein.